The chain runs to 328 residues: Glucan endo-1,3-beta-glucosidase, basic isoform 3 (328 aa).

The active-site Proton donor is the glutamate 85. The active-site Nucleophile is the glutamate 230. A propeptide spans valine 306 to methionine 328 (removed in mature form). Asparagine 318 is a glycosylation site (N-linked (GlcNAc...) asparagine).

Belongs to the glycosyl hydrolase 17 family.

Its subcellular location is the vacuole. The enzyme catalyses Hydrolysis of (1-&gt;3)-beta-D-glucosidic linkages in (1-&gt;3)-beta-D-glucans.. Is thought to be an important plant defense-related product against fungal pathogens. This is Glucan endo-1,3-beta-glucosidase, basic isoform 3 (GLUB3) from Solanum tuberosum (Potato).